Consider the following 493-residue polypeptide: Cytoplasmic tRNA 2-thiolation protein 2 (493 aa).

Ser-489 carries the post-translational modification Phosphoserine.

It belongs to the CTU2/NCS2 family. As to quaternary structure, interacts with NCS6 and URM1. May act by forming a heterodimer with NCS6.

It is found in the cytoplasm. The protein operates within tRNA modification; 5-methoxycarbonylmethyl-2-thiouridine-tRNA biosynthesis. Functionally, plays a central role in 2-thiolation of mcm(5)S(2)U at tRNA wobble positions of tRNA(Lys), tRNA(Glu) and tRNA(Gln). May act by forming a heterodimer with NCS6 that ligates sulfur from thiocarboxylated URM1 onto the uridine of tRNAs at wobble position. Prior mcm(5) tRNA modification by the elongator complex is required for 2-thiolation. May also be involved in protein urmylation. The protein is Cytoplasmic tRNA 2-thiolation protein 2 of Saccharomyces cerevisiae (strain AWRI1631) (Baker's yeast).